Reading from the N-terminus, the 158-residue chain is Small ribosomal subunit protein eS10 (158 aa).

Residues E99 to P158 form a disordered region. Gly residues predominate over residues G149–P158.

The protein belongs to the eukaryotic ribosomal protein eS10 family.

Its subcellular location is the cytoplasm. The polypeptide is Small ribosomal subunit protein eS10 (RpS10) (Spodoptera frugiperda (Fall armyworm)).